The sequence spans 156 residues: MNLNATILGQAIAFILFVWFCMKYVWPPLMAAIEKRQKEIADGLASAERAHKDLDLAKASATDQLKKAKAEVQVIIEQANKRRAQILDEAKTEAEQERTKIVAQAQAEIEAERKRAREELRKQVAILAVAGAEKIIERSVDEAANSDIVDKLVAEL.

The helical transmembrane segment at 11 to 31 (AIAFILFVWFCMKYVWPPLMA) threads the bilayer.

It belongs to the ATPase B chain family. F-type ATPases have 2 components, F(1) - the catalytic core - and F(0) - the membrane proton channel. F(1) has five subunits: alpha(3), beta(3), gamma(1), delta(1), epsilon(1). F(0) has three main subunits: a(1), b(2) and c(10-14). The alpha and beta chains form an alternating ring which encloses part of the gamma chain. F(1) is attached to F(0) by a central stalk formed by the gamma and epsilon chains, while a peripheral stalk is formed by the delta and b chains.

Its subcellular location is the cell inner membrane. Functionally, f(1)F(0) ATP synthase produces ATP from ADP in the presence of a proton or sodium gradient. F-type ATPases consist of two structural domains, F(1) containing the extramembraneous catalytic core and F(0) containing the membrane proton channel, linked together by a central stalk and a peripheral stalk. During catalysis, ATP synthesis in the catalytic domain of F(1) is coupled via a rotary mechanism of the central stalk subunits to proton translocation. In terms of biological role, component of the F(0) channel, it forms part of the peripheral stalk, linking F(1) to F(0). The chain is ATP synthase subunit b from Salmonella gallinarum (strain 287/91 / NCTC 13346).